A 440-amino-acid polypeptide reads, in one-letter code: Enolase (440 aa).

The tract at residues 120–189 is igE-binding determinant; it reads KAAAAEKRVP…TEAMRQGAEV (70 aa). Residues His159 and Glu168 each coordinate substrate. Glu211 acts as the Proton donor in catalysis. Positions 246, 297, and 324 each coordinate Mg(2+). Residues Glu297 and Asp324 each contribute to the substrate site. The Proton acceptor role is filled by Lys349. Residues 376 to 379 and Lys400 contribute to the substrate site; that span reads SHRS.

It belongs to the enolase family. As to quaternary structure, homodimer. It depends on Mg(2+) as a cofactor.

The protein resides in the cytoplasm. The catalysed reaction is (2R)-2-phosphoglycerate = phosphoenolpyruvate + H2O. The protein operates within carbohydrate degradation; glycolysis; pyruvate from D-glyceraldehyde 3-phosphate: step 4/5. This is Enolase (ENO) from Davidiella tassiana (Mycosphaerella tassiana).